The primary structure comprises 1188 residues: Spermatogenesis-associated protein 31C1 (1188 aa).

The chain crosses the membrane as a helical span at residues 23-43 (PWVLDIFLTLVFALGLFFLLL). Disordered stretches follow at residues 57–92 (PSPR…KNHS), 121–249 (LEKG…LLTP), 483–510 (PGTS…EAQT), 530–567 (TPQN…DSGS), 733–813 (MPER…PTVP), 934–1013 (NMGH…PSIS), 1121–1143 (QQAT…QQPL), and 1155–1188 (LRHP…HHHH). Basic residues-rich tracts occupy residues 59-68 (PRKRKRHLVS) and 80-92 (RRGR…KNHS). Residues 138-154 (VGKRTPDGASRSSHEPM) are compositionally biased toward basic and acidic residues. Positions 191–207 (SSLSASQPPEPSLLLER) are enriched in low complexity. A compositionally biased stretch (pro residues) spans 210–241 (PEPPALFPHPPHTPDPLACSPPPPKGFTPPPL). Over residues 495-510 (WQSSTSTGESSKEAQT) the composition is skewed to polar residues. 2 stretches are compositionally biased toward polar residues: residues 783–800 (LKGS…SSRA) and 943–954 (PNCQGSCKSQSP). Positions 960 to 976 (HKRENSRKPNLEKHEEM) are enriched in basic and acidic residues. Residues 1121-1130 (QQATLKNQSR) show a composition bias toward polar residues.

Belongs to the SPATA31 family.

The protein localises to the membrane. May play a role in spermatogenesis. The polypeptide is Spermatogenesis-associated protein 31C1 (SPATA31C1) (Homo sapiens (Human)).